Here is a 194-residue protein sequence, read N- to C-terminus: Holliday junction branch migration complex subunit RuvA (194 aa).

The domain I stretch occupies residues 1-63; it reads MFEYLKGTVA…EDELSLYGFM (63 aa). The interval 64-142 is domain II; that stretch reads SIEELDMFQK…KTNVVYDYTL (79 aa). Residues 143–151 form a flexible linker region; sequence FNDDHKDDD. The segment at 151-194 is domain III; it reads DEAVQALMALGYSKLESEKAVEAVRDMSLGTEDVIKRALKWLMK.

Belongs to the RuvA family. In terms of assembly, homotetramer. Forms an RuvA(8)-RuvB(12)-Holliday junction (HJ) complex. HJ DNA is sandwiched between 2 RuvA tetramers; dsDNA enters through RuvA and exits via RuvB. An RuvB hexamer assembles on each DNA strand where it exits the tetramer. Each RuvB hexamer is contacted by two RuvA subunits (via domain III) on 2 adjacent RuvB subunits; this complex drives branch migration. In the full resolvosome a probable DNA-RuvA(4)-RuvB(12)-RuvC(2) complex forms which resolves the HJ.

The protein localises to the cytoplasm. In terms of biological role, the RuvA-RuvB-RuvC complex processes Holliday junction (HJ) DNA during genetic recombination and DNA repair, while the RuvA-RuvB complex plays an important role in the rescue of blocked DNA replication forks via replication fork reversal (RFR). RuvA specifically binds to HJ cruciform DNA, conferring on it an open structure. The RuvB hexamer acts as an ATP-dependent pump, pulling dsDNA into and through the RuvAB complex. HJ branch migration allows RuvC to scan DNA until it finds its consensus sequence, where it cleaves and resolves the cruciform DNA. The chain is Holliday junction branch migration complex subunit RuvA from Alkaliphilus oremlandii (strain OhILAs) (Clostridium oremlandii (strain OhILAs)).